The chain runs to 559 residues: 2-succinyl-5-enolpyruvyl-6-hydroxy-3-cyclohexene-1-carboxylate synthase (559 aa).

The protein belongs to the TPP enzyme family. MenD subfamily. Homodimer. Requires Mg(2+) as cofactor. Mn(2+) is required as a cofactor. Thiamine diphosphate serves as cofactor.

The catalysed reaction is isochorismate + 2-oxoglutarate + H(+) = 5-enolpyruvoyl-6-hydroxy-2-succinyl-cyclohex-3-ene-1-carboxylate + CO2. Its pathway is quinol/quinone metabolism; 1,4-dihydroxy-2-naphthoate biosynthesis; 1,4-dihydroxy-2-naphthoate from chorismate: step 2/7. It participates in quinol/quinone metabolism; menaquinone biosynthesis. In terms of biological role, catalyzes the thiamine diphosphate-dependent decarboxylation of 2-oxoglutarate and the subsequent addition of the resulting succinic semialdehyde-thiamine pyrophosphate anion to isochorismate to yield 2-succinyl-5-enolpyruvyl-6-hydroxy-3-cyclohexene-1-carboxylate (SEPHCHC). The protein is 2-succinyl-5-enolpyruvyl-6-hydroxy-3-cyclohexene-1-carboxylate synthase of Edwardsiella ictaluri (strain 93-146).